We begin with the raw amino-acid sequence, 146 residues long: Prefoldin subunit alpha (146 aa).

This sequence belongs to the prefoldin alpha subunit family. In terms of assembly, heterohexamer of two alpha and four beta subunits.

The protein localises to the cytoplasm. In terms of biological role, molecular chaperone capable of stabilizing a range of proteins. Seems to fulfill an ATP-independent, HSP70-like function in archaeal de novo protein folding. This chain is Prefoldin subunit alpha, found in Methanococcus vannielii (strain ATCC 35089 / DSM 1224 / JCM 13029 / OCM 148 / SB).